The chain runs to 459 residues: Alpha-N-acetylgalactosaminidase (459 aa).

Positions 1–31 (MHNIHRRHFLKAAGAVTAGLVTANIALNANA) form a signal peptide, tat-type signal. NAD(+)-binding positions include 64–65 (ER), aspartate 86, 135–138 (WEWH), 155–156 (EV), and asparagine 184. Substrate contacts are provided by residues tyrosine 213, arginine 232, 244-247 (YPTH), and tyrosine 326. Tyrosine 244 provides a ligand contact to NAD(+).

The protein belongs to the Gfo/Idh/MocA family. Glycosyl hydrolase 109 subfamily. It depends on NAD(+) as a cofactor. Predicted to be exported by the Tat system. The position of the signal peptide cleavage has not been experimentally proven.

It carries out the reaction Cleavage of non-reducing alpha-(1-&gt;3)-N-acetylgalactosamine residues from human blood group A and AB mucin glycoproteins, Forssman hapten and blood group A lacto series glycolipids.. Its function is as follows. Glycosidase that has specific alpha-N-acetylgalactosaminidase activity. The protein is Alpha-N-acetylgalactosaminidase (nagA) of Shewanella oneidensis (strain ATCC 700550 / JCM 31522 / CIP 106686 / LMG 19005 / NCIMB 14063 / MR-1).